The chain runs to 195 residues: Glycine-rich protein A3 (195 aa).

Disordered stretches follow at residues 23-103 (AGGG…GVAG) and 159-182 (VMESLSRESTGRARSTDTRSGSNL). The span at 47–77 (PAGGGYPPQGYPPAGGGYPPQGYPPAGGGYP) shows a compositional bias: gly residues. The span at 82-94 (PPAGHHSGSSAPH) shows a compositional bias: low complexity. The span at 163–175 (LSRESTGRARSTD) shows a compositional bias: basic and acidic residues.

The protein is Glycine-rich protein A3 of Daucus carota (Wild carrot).